Here is a 263-residue protein sequence, read N- to C-terminus: 4-hydroxy-2-oxo-heptane-1,7-dioate aldolase (263 aa).

His45 functions as the Proton acceptor in the catalytic mechanism. Position 147 (Gln147) interacts with substrate. Glu149 is an a divalent metal cation binding site. Substrate is bound by residues Ala174 and Asp175. Asp175 provides a ligand contact to a divalent metal cation.

This sequence belongs to the HpcH/HpaI aldolase family. Homohexamer; trimer of dimers. It depends on a divalent metal cation as a cofactor.

It catalyses the reaction 4-hydroxy-2-oxoheptanedioate = succinate semialdehyde + pyruvate. It participates in aromatic compound metabolism; 4-hydroxyphenylacetate degradation; pyruvate and succinate semialdehyde from 4-hydroxyphenylacetate: step 7/7. Its function is as follows. Catalyzes the reversible retro-aldol cleavage of 4-hydroxy-2-ketoheptane-1,7-dioate (HKHD) to pyruvate and succinic semialdehyde. The polypeptide is 4-hydroxy-2-oxo-heptane-1,7-dioate aldolase (Salmonella heidelberg (strain SL476)).